Here is a 253-residue protein sequence, read N- to C-terminus: Phycoerythrobilin:ferredoxin oxidoreductase (253 aa).

Belongs to the HY2 family.

The catalysed reaction is (3Z)-phycoerythrobilin + oxidized 2[4Fe-4S]-[ferredoxin] = 15,16-dihydrobiliverdin + reduced 2[4Fe-4S]-[ferredoxin] + 2 H(+). Catalyzes the two-electron reduction of the C2 and C3(1) diene system of 15,16-dihydrobiliverdin. This chain is Phycoerythrobilin:ferredoxin oxidoreductase, found in Prochlorococcus marinus (strain MIT 9301).